Consider the following 125-residue polypeptide: MQTIEQQITNVIEESLIDMGFELVLVKFKGVNSKVVEILIDSLNSEKVSVEDCTKVSRTIPAILDVENLIEDASSLEVASSGLERPLVKFENYNRFLGREVKITLKELLNDKTSYQGKIIKAENK.

The protein belongs to the RimP family.

It localises to the cytoplasm. Required for maturation of 30S ribosomal subunits. The polypeptide is Ribosome maturation factor RimP (Rickettsia canadensis (strain McKiel)).